The primary structure comprises 297 residues: Phosphoribosylaminoimidazole-succinocarboxamide synthase (297 aa).

Belongs to the SAICAR synthetase family.

It catalyses the reaction 5-amino-1-(5-phospho-D-ribosyl)imidazole-4-carboxylate + L-aspartate + ATP = (2S)-2-[5-amino-1-(5-phospho-beta-D-ribosyl)imidazole-4-carboxamido]succinate + ADP + phosphate + 2 H(+). Its pathway is purine metabolism; IMP biosynthesis via de novo pathway; 5-amino-1-(5-phospho-D-ribosyl)imidazole-4-carboxamide from 5-amino-1-(5-phospho-D-ribosyl)imidazole-4-carboxylate: step 1/2. In Methylococcus capsulatus (strain ATCC 33009 / NCIMB 11132 / Bath), this protein is Phosphoribosylaminoimidazole-succinocarboxamide synthase.